Reading from the N-terminus, the 326-residue chain is Phospho-N-acetylmuramoyl-pentapeptide-transferase (326 aa).

The next 9 helical transmembrane spans lie at 3–23 (ISISAGIVTFLLTLVGIPAFI), 51–71 (TMGGLIFLIAAVVVSFLVALF), 79–99 (VGMILFILVLYGLVGFLDDFL), 115–135 (LALQLLGGVIFYLFYERGGDM), 138–158 (IFGYQVHLGIFYIVFALFWLV), 169–189 (GIDGLASISVVISLSAYGVIA), 195–215 (MDILLVILAMIGGLLGFFVFN), 221–243 (VFMGDVGSLALGGMLAAISMALH), and 304–324 (VDFFFWGVGLLASLLTLAILY).

This sequence belongs to the glycosyltransferase 4 family. MraY subfamily. Mg(2+) is required as a cofactor.

The protein resides in the cell membrane. The catalysed reaction is UDP-N-acetyl-alpha-D-muramoyl-L-alanyl-gamma-D-glutamyl-L-lysyl-D-alanyl-D-alanine + di-trans,octa-cis-undecaprenyl phosphate = Mur2Ac(oyl-L-Ala-gamma-D-Glu-L-Lys-D-Ala-D-Ala)-di-trans,octa-cis-undecaprenyl diphosphate + UMP. The protein operates within cell wall biogenesis; peptidoglycan biosynthesis. In terms of biological role, catalyzes the initial step of the lipid cycle reactions in the biosynthesis of the cell wall peptidoglycan: transfers peptidoglycan precursor phospho-MurNAc-pentapeptide from UDP-MurNAc-pentapeptide onto the lipid carrier undecaprenyl phosphate, yielding undecaprenyl-pyrophosphoryl-MurNAc-pentapeptide, known as lipid I. The sequence is that of Phospho-N-acetylmuramoyl-pentapeptide-transferase from Streptococcus pneumoniae (strain Hungary19A-6).